The chain runs to 630 residues: MVDQESLVSFSSETSQSINSDIDIESQQQPRQYIPSNEKDGNKERLHLTRTETVKSLQEMGMTQDAPIPDVNAPQTTTKNAIFPEEYTMETPTGLVPVATLQSLGRTSTAISKSRTRQIERSVSRRSQNIAASSNSSNKEELEDEEEVSSDMSNQQPELDPEIEFVTFVTGDPTNPHNWPLWIRWAYTVILSCLVICVAYGSACITGGLFTVQEQYHVGLEAAILSCSLMVIGFSLGPLIWSPVSDLYGRRLAYFISMGLYTIFNIPCALSPNLGGLLVCRFLCGVFSSSGLCLVGGSIADMFPSETRGRAIAFFAFAPYTGPIIGPLVNGFVSVCTRRMDLIFWINMAFAGVMWIIVAFIPETYAPVILKWRAAKLRKETGNPKIMTEQEAQGVSVNEMMKACLIRPLYFAVTEPVLDLTCFYVCLIYSLLYAFFFAFPVVFGELYGYKDNLIGLMFIPILIGATMALATTFYCENEYLKLVKKRKPTPEDRLFGAMIGAPFAAAALWILGATSYKHIIWVGPASSGLAFGYGMVLIYYSLNNYIIDCYVQYASSALATKVFLRSAGGAAFPLFTNQMYHKLGLQWASWLLAFISTAMILLPFGFYYYGKTLRHKLSKKDYSIDTIEGY.

Over residues 1–35 (MVDQESLVSFSSETSQSINSDIDIESQQQPRQYIP) the composition is skewed to polar residues. Disordered regions lie at residues 1-46 (MVDQ…KERL) and 107-157 (TSTA…NQQP). The span at 37-46 (NEKDGNKERL) shows a compositional bias: basic and acidic residues. Residues 125-137 (RRSQNIAASSNSS) show a composition bias toward low complexity. N-linked (GlcNAc...) asparagine glycosylation is present at asparagine 135. Transmembrane regions (helical) follow at residues 190-210 (ILSC…GGLF), 222-242 (AAIL…LIWS), 252-272 (LAYF…ALSP), 282-302 (FLCG…IADM), 312-332 (IAFF…VNGF), 342-362 (LIFW…AFIP), 423-443 (FYVC…PVVF), 453-473 (LIGL…ATTF), 494-514 (LFGA…LGAT), 519-539 (IIWV…VLIY), 553-575 (YASS…FPLF), and 587-607 (WASW…FGFY).

It belongs to the major facilitator superfamily. DHA1 family. Polyamines/proton antiporter (TC 2.A.1.2.16) subfamily.

It localises to the cell membrane. Its function is as follows. Cell membrane polyamine/proton antiporter, involved in the detoxification of excess polyamines in the cytoplasm. Involved in the resistance to the imidazole antifungal drugs tioconazole, miconazole, clotrimazole and ketoconazole; to the triazole fluconazole; but not to the antifungals flucytosine or amphotericin B. Plays a role in spermine homeostasis, but spermine accumulation in response to clotrimazole is independent of TPO3. The sequence is that of Multidrug transporter TPO3 from Candida glabrata (strain ATCC 2001 / BCRC 20586 / JCM 3761 / NBRC 0622 / NRRL Y-65 / CBS 138) (Yeast).